The following is a 327-amino-acid chain: MTSTLRVAFAGTPEFAQIALAALHQAGLPIVAVLSQPDRPAGRGMHLQASPVKQYAVSHGLGPVLQPPSLRRTGKYPQEAAAAIDALSAQQPDVMVVAAYGLILPQEVLDLPRFGCINIHGSLLPRWRGAAPIHRAIEAGDAETGITLMQMDAGLDTGDMIAMEHVPIGLTDTTGTLHDTLAALGGRMVVEALARLAQDGSLPATPQPAEGVTYAEKIAKEEAALDWSRQSAALLRQVHAFNPFPGASAELDGVSIKFWQAEALPDRPADAQPGAVLAADADGVVIACGAGALRVTQLQKPGGKRLPAREFLQGLPIRPGQRFASRA.

Residue 122–125 (SLLP) participates in (6S)-5,6,7,8-tetrahydrofolate binding.

Belongs to the Fmt family.

The catalysed reaction is L-methionyl-tRNA(fMet) + (6R)-10-formyltetrahydrofolate = N-formyl-L-methionyl-tRNA(fMet) + (6S)-5,6,7,8-tetrahydrofolate + H(+). Its function is as follows. Attaches a formyl group to the free amino group of methionyl-tRNA(fMet). The formyl group appears to play a dual role in the initiator identity of N-formylmethionyl-tRNA by promoting its recognition by IF2 and preventing the misappropriation of this tRNA by the elongation apparatus. This is Methionyl-tRNA formyltransferase from Ralstonia nicotianae (strain ATCC BAA-1114 / GMI1000) (Ralstonia solanacearum).